The following is a 776-amino-acid chain: MDHARAALSNLFSVEPMSYTRFSIARQTDGDNSHVEMKLSADDEEGGDIERPEHMHVSMAQPQRNGKRLCFLVIAAVLLLLIGFLIGYLSYRGRIELAARCQDGSGGCEITPTASYLVDGEGTVEEEIQGPPVIFWPELKAMLSKKLSAKNLVDNLRWRVGVDSFEAGEAEDTNMATYIHEEFRNFLDKVWNDEHYIKLQVRGSTKNQVSISINGKEEILETPDAIVAYSESGSVSGKPVYVNYGLKKDFEIIQKVVASLNGTIVIVRAGKITLAEKVANAKEAGAAGVLMYVDSLMYGITDTLIPFGHAHLGTGDPYTPGFPSFNHTQFPPVESSGLPHIAVQTISSSAAARLFSKMDGDTCSEGWKGAIHSCKVTTKQESQIMVKLDVNNSMKDRKILNIFGAIQGFEEPDRYVVIGAQRDSWGPGVAKAGTGTAILLELARVISDIVKNEGYKPRRSIIFASWSAGDYGAVGATEWLEGYSAMLHAKAFTYISLDAPVLGASHVKISASPLLYMLLGSIMKGVKNPAAVSESLYNRLGPDWVKAVVPLGLDNAAFPFLAYSGIPVLSFGFYNKDEEYRFLDTKGDTLENLRKIDNLDALLAAAAEVAGQAALRLTHDHELFLDIGRYSEELLAYQEEFLPYIKEVRELGLTLDWLFFARGDFQRAVTALRRDIANSDGENRVIRRALNDRMMKVEYDFLSPYLSPKDVPFRHIFFGKGPHTLRSLVEHLQLLKTNRSSVDLNLLREQLALATWTIKGAANALGGDIWETDNEF.

The Cytoplasmic portion of the chain corresponds to 1 to 70; that stretch reads MDHARAALSN…QPQRNGKRLC (70 aa). The Endocytosis signal signature appears at 19–22; the sequence is YTRF. S23 bears the Phosphoserine mark. C70 carries S-palmitoyl cysteine lipidation. A helical; Signal-anchor for type II membrane protein membrane pass occupies residues 71-91; the sequence is FLVIAAVLLLLIGFLIGYLSY. The Extracellular portion of the chain corresponds to 92–776; it reads RGRIELAARC…GDIWETDNEF (685 aa). Residues 230–322 enclose the PA domain; that stretch reads SESGSVSGKP…GTGDPYTPGF (93 aa). N261, N326, and N391 each carry an N-linked (GlcNAc...) asparagine glycan. A ligand-binding region spans residues 586 to 776; it reads KGDTLENLRK…GDIWETDNEF (191 aa). Residues 662-664 carry the Cell attachment site motif; sequence RGD. N-linked (GlcNAc...) asparagine glycosylation is present at N738.

It belongs to the peptidase M28 family. M28B subfamily. Homodimer; disulfide-linked. Binds one transferrin molecule per subunit. Stearoylated. Stearoylation does not affect iron uptake. In terms of processing, N- and O-glycosylated, phosphorylated and palmitoylated.

It is found in the cell membrane. It localises to the melanosome. Cellular uptake of iron occurs via receptor-mediated endocytosis of ligand-occupied transferrin receptor into specialized endosomes. Endosomal acidification leads to iron release. The apotransferrin-receptor complex is then recycled to the cell surface with a return to neutral pH and the concomitant loss of affinity of apotransferrin for its receptor. Transferrin receptor is necessary for development of erythrocytes and the nervous system. Acts as a lipid sensor that regulates mitochondrial fusion by regulating activation of the JNK pathway. When dietary levels of stearate (C18:0) are low, promotes activation of the JNK pathway, resulting in HUWE1-mediated ubiquitination and subsequent degradation of the mitofusin MFN2 and inhibition of mitochondrial fusion. When dietary levels of stearate (C18:0) are high, TFRC stearoylation inhibits activation of the JNK pathway and thus degradation of the mitofusin MFN2. Mediates uptake of NICOL1 into fibroblasts where it may regulate extracellular matrix production. The sequence is that of Transferrin receptor protein 1 (TFRC) from Gallus gallus (Chicken).